Consider the following 115-residue polypeptide: Ribonuclease P protein component (115 aa).

Belongs to the RnpA family. As to quaternary structure, consists of a catalytic RNA component (M1 or rnpB) and a protein subunit.

The enzyme catalyses Endonucleolytic cleavage of RNA, removing 5'-extranucleotides from tRNA precursor.. Functionally, RNaseP catalyzes the removal of the 5'-leader sequence from pre-tRNA to produce the mature 5'-terminus. It can also cleave other RNA substrates such as 4.5S RNA. The protein component plays an auxiliary but essential role in vivo by binding to the 5'-leader sequence and broadening the substrate specificity of the ribozyme. The chain is Ribonuclease P protein component from Bacillus mycoides (strain KBAB4) (Bacillus weihenstephanensis).